A 31-amino-acid polypeptide reads, in one-letter code: Cytochrome b6-f complex subunit 6 (31 aa).

Residues 4–24 (ITSYFGFLLAALTITSALFIG) traverse the membrane as a helical segment.

The protein belongs to the PetL family. The 4 large subunits of the cytochrome b6-f complex are cytochrome b6, subunit IV (17 kDa polypeptide, PetD), cytochrome f and the Rieske protein, while the 4 small subunits are PetG, PetL, PetM and PetN. The complex functions as a dimer.

It is found in the plastid. It localises to the chloroplast thylakoid membrane. Component of the cytochrome b6-f complex, which mediates electron transfer between photosystem II (PSII) and photosystem I (PSI), cyclic electron flow around PSI, and state transitions. PetL is important for photoautotrophic growth as well as for electron transfer efficiency and stability of the cytochrome b6-f complex. This chain is Cytochrome b6-f complex subunit 6, found in Solanum tuberosum (Potato).